Here is a 413-residue protein sequence, read N- to C-terminus: Branched-chain-amino-acid aminotransferase 3, chloroplastic (413 aa).

A chloroplast-targeting transit peptide spans 1–60 (MERAAILPSVNQNYLLCPSRAFSTRLHSSTRNLSPPSFASIKLQHSSSSVSSNGGISLTR). Lysine 259 is subject to N6-(pyridoxal phosphate)lysine.

It belongs to the class-IV pyridoxal-phosphate-dependent aminotransferase family. Requires pyridoxal 5'-phosphate as cofactor. In terms of tissue distribution, expressed in the phloem cells.

Its subcellular location is the plastid. It localises to the chloroplast. It catalyses the reaction L-leucine + 2-oxoglutarate = 4-methyl-2-oxopentanoate + L-glutamate. It carries out the reaction L-isoleucine + 2-oxoglutarate = (S)-3-methyl-2-oxopentanoate + L-glutamate. The enzyme catalyses L-valine + 2-oxoglutarate = 3-methyl-2-oxobutanoate + L-glutamate. The catalysed reaction is a 2-oxocarboxylate + L-methionine = 4-methylsulfanyl-2-oxobutanoate + an L-alpha-amino acid. It functions in the pathway amino-acid biosynthesis; L-isoleucine biosynthesis; L-isoleucine from 2-oxobutanoate: step 4/4. The protein operates within amino-acid biosynthesis; L-leucine biosynthesis; L-leucine from 3-methyl-2-oxobutanoate: step 4/4. It participates in amino-acid biosynthesis; L-valine biosynthesis; L-valine from pyruvate: step 4/4. With respect to regulation, inhibited by Ser- or Thr-derived imine. In terms of biological role, converts 2-oxo acids to branched-chain amino acids. Acts on leucine, isoleucine and valine. Also involved in methionine chain elongation cycle of aliphatic glucosinolate formation. Catalyzes the conversion of 5-methylthiopentyl-2-oxo and 6-methylthiohexyl-2-oxo acids to their respective Met derivatives, homomethionine and dihomo-methionine, respectively. The chain is Branched-chain-amino-acid aminotransferase 3, chloroplastic from Arabidopsis thaliana (Mouse-ear cress).